A 262-amino-acid polypeptide reads, in one-letter code: MEHLERCAWVLRGTLVRSAVRKYLPWALAASMLAGSLLKELSPLPESYLSNKRNVLNVYFVKVAWAWTFCLLLPFIALTNYHLTGKAGLVLRRLSTLLVGTAIWYVCTAIFSNIEHYTGSCYQSPALEGERKEHQSKQQCHGEGGFWHGFDISGHSFLLTFCALMIVEEMAVLHEVKTDRNHCLHAAITTLVVALGFLTFIWVWMFLCTAVYFHNLSQKVFGTLFGLLGWYGTYGCWYLKSFSPGLPPQSSSLNLKQDTYKK.

Residues 1-23 (MEHLERCAWVLRGTLVRSAVRKY) lie on the Cytoplasmic side of the membrane. Residues 24–44 (LPWALAASMLAGSLLKELSPL) form a helical membrane-spanning segment. Residues 45-57 (PESYLSNKRNVLN) lie on the Lumenal side of the membrane. A helical membrane pass occupies residues 58–78 (VYFVKVAWAWTFCLLLPFIAL). Residues 79 to 93 (TNYHLTGKAGLVLRR) are Cytoplasmic-facing. The helical transmembrane segment at 94 to 114 (LSTLLVGTAIWYVCTAIFSNI) threads the bilayer. At 115-145 (EHYTGSCYQSPALEGERKEHQSKQQCHGEGG) the chain is on the lumenal side. Residues 146–166 (FWHGFDISGHSFLLTFCALMI) form a helical membrane-spanning segment. Residue H155 is part of the active site. Residues 167-190 (VEEMAVLHEVKTDRNHCLHAAITT) lie on the Cytoplasmic side of the membrane. A helical transmembrane segment spans residues 191 to 211 (LVVALGFLTFIWVWMFLCTAV). The Lumenal segment spans residues 212–218 (YFHNLSQ). The active site involves H214. A helical membrane pass occupies residues 219–239 (KVFGTLFGLLGWYGTYGCWYL). The Cytoplasmic portion of the chain corresponds to 240–262 (KSFSPGLPPQSSSLNLKQDTYKK).

Belongs to the FIT family. FIT2 subfamily.

The protein localises to the endoplasmic reticulum membrane. The enzyme catalyses an acyl-CoA + H2O = an acyl-4'-phosphopantetheine + adenosine 3',5'-bisphosphate + 2 H(+). It catalyses the reaction (9Z)-octadecenoyl-CoA + H2O = S-(9Z-octadecenoyl)-4'-phosphopantetheine + adenosine 3',5'-bisphosphate + 2 H(+). It carries out the reaction (5Z,8Z,11Z,14Z)-eicosatetraenoyl-CoA + H2O = S-(5Z,8Z,11Z,14Z-eicosatetraenoyl)-4'-phosphopantetheine + adenosine 3',5'-bisphosphate + 2 H(+). The catalysed reaction is hexadecanoyl-CoA + H2O = S-hexadecanoyl-4'-phosphopantetheine + adenosine 3',5'-bisphosphate + 2 H(+). Its function is as follows. Fatty acyl-coenzyme A (CoA) diphosphatase that hydrolyzes fatty acyl-CoA to yield acyl-4'-phosphopantetheine and adenosine 3',5'-bisphosphate. Preferentially hydrolyzes unsaturated long-chain acyl-CoA substrates such as oleoyl-CoA/(9Z)-octadecenoyl-CoA and arachidonoyl-CoA/(5Z,8Z,11Z,14Z)-eicosatetraenoyl-CoA in the endoplasmic reticulum (ER) lumen. This catalytic activity is required for maintaining ER structure and for lipid droplets (LDs) biogenesis, which are lipid storage organelles involved in maintaining lipid and energy homeostasis. Directly binds to diacylglycerol (DAGs) and triacylglycerol, which is also important for LD biogenesis. May support directional budding of nacent LDs from the ER into the cytosol by reducing DAG levels at sites of LD formation. Plays a role in the regulation of cell morphology and cytoskeletal organization. This is Acyl-coenzyme A diphosphatase FITM2 from Bos taurus (Bovine).